We begin with the raw amino-acid sequence, 108 residues long: Cell cycle protein GpsB (108 aa).

Residues 32–69 (LDNVIKDYENFNAQIEALKAENEALKKAKYQARNTVSA) are a coiled coil.

Belongs to the GpsB family. As to quaternary structure, forms polymers through the coiled coil domains. Interacts with PBP1, MreC and EzrA.

The protein resides in the cytoplasm. Its function is as follows. Divisome component that associates with the complex late in its assembly, after the Z-ring is formed, and is dependent on DivIC and PBP2B for its recruitment to the divisome. Together with EzrA, is a key component of the system that regulates PBP1 localization during cell cycle progression. Its main role could be the removal of PBP1 from the cell pole after pole maturation is completed. Also contributes to the recruitment of PBP1 to the division complex. Not essential for septum formation. This chain is Cell cycle protein GpsB, found in Streptococcus pyogenes serotype M49 (strain NZ131).